The sequence spans 197 residues: Protein jagunal (197 aa).

Topologically, residues 1-39 (MATRGGPMVAGTDGNDFEFRQRVAGTYQISLLNKSRLKY) are cytoplasmic. The helical transmembrane segment at 40-60 (CIFFHALLFFVMLAKLTSDIL) threads the bilayer. Residues 61 to 78 (DRLDIFVLEIEELEVPSP) lie on the Lumenal side of the membrane. The chain crosses the membrane as a helical span at residues 79 to 99 (LWWEYVWAGSLLTSFLGLSAA). The Cytoplasmic portion of the chain corresponds to 100–109 (RGNKVREMQK). A helical transmembrane segment spans residues 110-130 (YMIAILVFAILPLLYCFAYYF). Topologically, residues 131 to 159 (SDVWEFATMDKSVELDETDIFIWRGYPYG) are lumenal. The chain crosses the membrane as a helical span at residues 160 to 180 (VFWYAFCFVGFQVHGFTLYFA). Residues 181-197 (YNLVKVWKARTATRKFQ) are Cytoplasmic-facing.

The protein belongs to the jagunal family.

The protein resides in the endoplasmic reticulum membrane. Functionally, required for endoplasmic reticulum organization and proper vesicular traffic during vitellogenesis. Required for oocyte and bristle growth. This Drosophila pseudoobscura pseudoobscura (Fruit fly) protein is Protein jagunal.